The chain runs to 363 residues: Aspartate-semialdehyde dehydrogenase (363 aa).

NADP(+) is bound by residues Thr15, Gly16, Ser17, Val18, Ser40, Ser43, and Leu87. Cys154 functions as the Acyl-thioester intermediate in the catalytic mechanism. NADP(+) is bound at residue Gly186. His251 serves as the catalytic Proton acceptor. Asn341 provides a ligand contact to NADP(+).

This sequence belongs to the aspartate-semialdehyde dehydrogenase family. As to quaternary structure, homotetramer; dimer of dimers.

It is found in the cytoplasm. The protein localises to the cytosol. The protein resides in the nucleus. The catalysed reaction is L-aspartate 4-semialdehyde + phosphate + NADP(+) = 4-phospho-L-aspartate + NADPH + H(+). The protein operates within amino-acid biosynthesis; L-methionine biosynthesis via de novo pathway; L-homoserine from L-aspartate: step 2/3. Its pathway is amino-acid biosynthesis; L-threonine biosynthesis; L-threonine from L-aspartate: step 2/5. With respect to regulation, inhibited by 4-amino-3-hydroxynaphthalene-1-sulfonic acid and the competitive inhibitor 1,4-benzoquinone and derivates such as 2-chloro-3-methoxy-1,4-naphthoquinone, 2,3-dichloro-1,4-naphthoquinone, 2-chloro-1,4-naphthoquinone, 2-bromo-1,4-naphthoquinone and 2,3-dichloro-5,8-dihydroxy-1,4-naphthoquinone. Catalyzes the NADPH-dependent formation of L-aspartate 4-semialdehyde (L-ASA) by the reductive dephosphorylation of 4-phospho-L-aspartate. Mediates the second step in the biosynthesis of amino acids that derive from aspartate (the aspartate family of amino acids), including methioinine and threonine, the latter of which is a precursor to isoleucine. The chain is Aspartate-semialdehyde dehydrogenase from Aspergillus fumigatus (strain ATCC MYA-4609 / CBS 101355 / FGSC A1100 / Af293) (Neosartorya fumigata).